Reading from the N-terminus, the 349-residue chain is Phosphorylcholine phosphatase (349 aa).

An N-terminal signal peptide occupies residues 1–22; sequence MTFAKGILAALALAAAVGQASA. Residue Asp53 is the Nucleophile of the active site. The Mg(2+) site is built by Asp53 and Asp55. Catalysis depends on Asp55, which acts as the Proton donor. A disulfide bond links Cys109 and Cys116. Asp284 is a Mg(2+) binding site.

The protein belongs to the HAD-like hydrolase superfamily. In terms of assembly, monomer. Homodimer. Homotetramer. It depends on Mg(2+) as a cofactor.

It is found in the periplasm. It carries out the reaction phosphocholine + H2O = choline + phosphate. The catalysed reaction is phosphoethanolamine + H2O = ethanolamine + phosphate. Activity is inhibited by high concentrations of phosphorylcholine, phosphorylethanolamine, choline or betaine. Displays different properties depending on the substrate utilized, the pH conditions as well as the presence or absence of metal ions. At pH 5, activity is inhibited by Al(3+) ions. At pH 7.4, the enzyme cannot catalyze the hydrolysis of pNPP, phosphorylethanolamine is a poor substrate in either the presence or absence of divalent cations, and activity measured with phosphorylcholine is independent of divalent cations or is not inhibited by Al(3+) ions. Mg(2+) produces identical activation at pH 5.0 and 7.4, but Zn(2+) is an activator at pH 5.0 and becomes an inhibitor at pH 7.4. This inhibition at pH 7.4 may be due to a transition from octahedral to tetrahedral coordination geometry, which is produced by hydrolysis of the Zn-hexacoordinated complex. Its function is as follows. Catalyzes the hydrolysis of phosphorylcholine (PCho) to produce choline and inorganic phosphate. Can also hydrolyze phosphorylethanolamine and the nonphysiological substrate p-nitrophenylphosphate (pNPP). Shows higher affinity and catalytic efficiency with phosphorylcholine as substrate. Is probably involved in virulence. The bacteria may break down various host compounds or host cell membranes through the coordinated action of phospholipase C and phosphocholine phosphatase. The final consequence of the action of these enzymes is an increase of the free choline concentration, which may promote the pathogenicity of P.aeruginosa. The protein is Phosphorylcholine phosphatase of Pseudomonas aeruginosa (strain ATCC 15692 / DSM 22644 / CIP 104116 / JCM 14847 / LMG 12228 / 1C / PRS 101 / PAO1).